Reading from the N-terminus, the 364-residue chain is Probable endopolygalacturonase B (364 aa).

The N-terminal stretch at 1-20 is a signal peptide; sequence MHFFQSSLVAATMGAALVAA. A propeptide spanning residues 21 to 29 is cleaved from the precursor; that stretch reads APAADLETR. Cys32 and Cys47 are disulfide-bonded. Residues Asn138 and Asn141 are each glycosylated (N-linked (GlcNAc...) asparagine). PbH1 repeat units lie at residues 159-188, 189-210, 211-231, 240-261, 269-291, and 303-324; these read SDHLTIKDVLLDNSAGTKLGHNTDAFDVGS, STYITIDGATVYNQDDCLAVNS, GEHITFTNGYCNGGHGLSIGS, VNDVTISNSQVINSQNGARIKT, VTGVKFQDISLKGITKYGIVVQQ, and TNGVKVSDITFEKVTGTVTSSA. The active-site Proton donor is Asp203. A disulfide bridge links Cys205 with Cys221. The active site involves His225. Cys331 and Cys336 are disulfide-bonded. An N-linked (GlcNAc...) asparagine glycan is attached at Asn338. The cysteines at positions 355 and 364 are disulfide-linked.

This sequence belongs to the glycosyl hydrolase 28 family.

It is found in the secreted. The enzyme catalyses (1,4-alpha-D-galacturonosyl)n+m + H2O = (1,4-alpha-D-galacturonosyl)n + (1,4-alpha-D-galacturonosyl)m.. Its function is as follows. Involved in maceration and soft-rotting of plant tissue. Hydrolyzes the 1,4-alpha glycosidic bonds of de-esterified pectate in the smooth region of the plant cell wall. The sequence is that of Probable endopolygalacturonase B (pgaB) from Aspergillus fumigatus (strain ATCC MYA-4609 / CBS 101355 / FGSC A1100 / Af293) (Neosartorya fumigata).